A 220-amino-acid chain; its full sequence is Deoxyribose-phosphate aldolase (220 aa).

Residue Asp-89 is the Proton donor/acceptor of the active site. The active-site Schiff-base intermediate with acetaldehyde is the Lys-151. The active-site Proton donor/acceptor is Lys-180.

Belongs to the DeoC/FbaB aldolase family. DeoC type 1 subfamily.

It is found in the cytoplasm. The catalysed reaction is 2-deoxy-D-ribose 5-phosphate = D-glyceraldehyde 3-phosphate + acetaldehyde. It participates in carbohydrate degradation; 2-deoxy-D-ribose 1-phosphate degradation; D-glyceraldehyde 3-phosphate and acetaldehyde from 2-deoxy-alpha-D-ribose 1-phosphate: step 2/2. Its function is as follows. Catalyzes a reversible aldol reaction between acetaldehyde and D-glyceraldehyde 3-phosphate to generate 2-deoxy-D-ribose 5-phosphate. This chain is Deoxyribose-phosphate aldolase, found in Streptococcus pneumoniae serotype 2 (strain D39 / NCTC 7466).